An 842-amino-acid chain; its full sequence is Microcephalin (842 aa).

Positions 1–93 constitute a BRCT 1 domain; sequence MAAPILKDVV…AHIDESLFPA (93 aa). Phosphoserine occurs at positions 279, 287, 296, and 333. Position 335 is a phosphothreonine (threonine 335). Residues 346 to 359 show a composition bias toward basic residues; it reads HSRPRSSSVKRKRV. Disordered stretches follow at residues 346-375, 418-443, and 563-624; these read HSRPRSSSVKRKRVSYGFHSPPKEKCKRKR, PDNLKERNSENLPPKSQLPSNPAQFS, and VGLK…PTRR. Composition is skewed to polar residues over residues 434 to 443 and 566 to 582; these read QLPSNPAQFS and KSTQDKGTTSKISNSSE. Over residues 586–608 the composition is skewed to basic and acidic residues; that stretch reads PSEHEPRSVVDCNVERSAEEKEN. 2 BRCT domains span residues 647–737 and 758–840; these read SGKG…PFEL and YRGT…NYLL.

As to quaternary structure, interacts with CDC27 and maybe other components of the APC/C complex. Interacts with histone variant H2AX under DNA damage conditions.

Its subcellular location is the cytoplasm. The protein resides in the cytoskeleton. The protein localises to the microtubule organizing center. It is found in the centrosome. In terms of biological role, implicated in chromosome condensation and DNA damage induced cellular responses. May play a role in neurogenesis and regulation of the size of the cerebral cortex. This chain is Microcephalin, found in Macaca fascicularis (Crab-eating macaque).